We begin with the raw amino-acid sequence, 427 residues long: Trigger factor (427 aa).

The PPIase FKBP-type domain occupies 163-248 (GDTVVIDFVG…IHEVKTKEVP (86 aa)).

Belongs to the FKBP-type PPIase family. Tig subfamily.

It localises to the cytoplasm. The enzyme catalyses [protein]-peptidylproline (omega=180) = [protein]-peptidylproline (omega=0). Its function is as follows. Involved in protein export. Acts as a chaperone by maintaining the newly synthesized protein in an open conformation. Functions as a peptidyl-prolyl cis-trans isomerase. The sequence is that of Trigger factor from Streptococcus agalactiae serotype III (strain NEM316).